Here is a 445-residue protein sequence, read N- to C-terminus: Reticulon-4 receptor-like 1 (445 aa).

The N-terminal stretch at 1–24 is a signal peptide; the sequence is MLRKGCCVELLLLLLAGELPLSGG. In terms of domain architecture, LRRNT spans 25-54; that stretch reads CPRDCVCYPSPMTVSCQAHNFAAIPEGIPE. LRR repeat units follow at residues 55–76, 77–98, 101–123, 126–147, 150–171, 174–195, 198–219, and 222–243; these read DSERIFLQNNHITFLQQGHFSP, AMVTLWIYSNNITFIAPNTFEG, HLEELDLGDNRQLRTLAPETFQG, KLHALYLYKCGLSSLPAGIFGG, SLQYLYLQDNHIEYLQDDIFVD, NLSHLFLHGNKLWSLGQGIFRG, NLDRLLLHENQLQWVHHKAFHD, and RLTTLFLFNNSLTELQGDCLAP. Positions 255-306 constitute an LRRCT domain; the sequence is NAWDCGCRARSLWEWLRRFRGSSSVVPCATPELRQGQDLKSLRVEDFRNCTG. 2 disordered regions span residues 304-380 and 401-421; these read CTGP…ELPE and RPKRKGKCARRTPIRAPSGVQ. 2 stretches are compositionally biased toward basic residues: residues 352–366 and 401–413; these read GSKKPGKNCTSHRNR and RPKRKGKCARRTP. The GPI-anchor amidated serine moiety is linked to residue serine 424. Residues 424 to 444 traverse the membrane as a helical segment; the sequence is SSGTALGVSLLAWILGLVVSL. A propeptide spans 425–445 (removed in mature form); it reads SGTALGVSLLAWILGLVVSLR.

Belongs to the Nogo receptor family. Identified in a complex that contains RTN4R, RTN4RL1 and NGFR; the interaction depends on the presence of chondroitin sulfate proteoglycans. Does not interact with MAG, OMG and RTN4. In terms of tissue distribution, detected in brain (at protein level). Expressed in various regions of the brain, including the cerebral cortex, hippocampus, striatum, thalamus and cerebellum.

Its subcellular location is the cell membrane. The protein resides in the membrane raft. It localises to the perikaryon. The protein localises to the cell projection. In terms of biological role, cell surface receptor. Plays a functionally redundant role in postnatal brain development and in regulating axon regeneration in the adult central nervous system. Contributes to normal axon migration across the brain midline and normal formation of the corpus callosum. Protects motoneurons against apoptosis; protection against apoptosis is probably mediated by MAG. Plays a role in inhibiting neurite outgrowth and axon regeneration via its binding to neuronal chondroitin sulfate proteoglycans. Binds heparin. Like other family members, plays a role in restricting the number dendritic spines and the number of synapses that are formed during brain development. Signaling mediates activation of Rho and downstream reorganization of the actin cytoskeleton. This is Reticulon-4 receptor-like 1 from Rattus norvegicus (Rat).